The primary structure comprises 399 residues: Bombesin receptor subtype-3 (399 aa).

Over 1-41 the chain is Extracellular; it reads MAQRQPHSPNQTLISITNDTESSSSVVSNDNTNKGWSGDNS. 2 N-linked (GlcNAc...) asparagine glycosylation sites follow: N10 and N18. A helical transmembrane segment spans residues 42 to 63; the sequence is PGIEALCAIYITYAVIISVGIL. The Cytoplasmic segment spans residues 64–82; it reads GNAILIKVFFKTKSMQTVP. A helical membrane pass occupies residues 83-103; the sequence is NIFITSLAFGDLLLLLTCVPV. Residues 104-121 lie on the Extracellular side of the membrane; that stretch reads DATHYLAEGWLFGRIGCK. C120 and C203 form a disulfide bridge. The helical transmembrane segment at 122 to 143 threads the bilayer; it reads VLSFIRLTSVGVSVFTLTILSA. Residues 144 to 163 are Cytoplasmic-facing; the sequence is DRYKAVVKPLERQPSNAILK. A helical transmembrane segment spans residues 164–184; that stretch reads TCVKAGCVWIVSMIFALPEAI. Over 185 to 220 the chain is Extracellular; the sequence is FSNVYTFRDPNKNMTFESCTSYPVSKKLLQEIHSLL. The helical transmembrane segment at 221-241 threads the bilayer; that stretch reads CFLVFYIIPLSIISVYYSLIA. Residues 242 to 272 are Cytoplasmic-facing; the sequence is RTLYKSTLNIPTEEQSHARKQIESRKRIART. The helical transmembrane segment at 273 to 293 threads the bilayer; the sequence is VLVLVALFALCWLPNHLLYLY. Topologically, residues 294-313 are extracellular; that stretch reads HSFTSQTYVDPSAMHFIFTI. The helical transmembrane segment at 314–333 threads the bilayer; sequence FSRVLAFSNSCVNPFALYWL. Residues 334–399 are Cytoplasmic-facing; it reads SKSFQKHFKA…CSVKQAEDRF (66 aa). C347 carries S-palmitoyl cysteine lipidation.

The protein belongs to the G-protein coupled receptor 1 family. Interacts with C6orf89. In terms of tissue distribution, in germ cells in testis. Lung carcinoma cells.

It localises to the cell membrane. Role in sperm cell division, maturation, or function. This receptor mediates its action by association with G proteins that activate a phosphatidylinositol-calcium second messenger system. The chain is Bombesin receptor subtype-3 (BRS3) from Homo sapiens (Human).